We begin with the raw amino-acid sequence, 342 residues long: Serine/threonine-protein kinase-transforming protein mos (342 aa).

In terms of domain architecture, Protein kinase spans 63 to 338; that stretch reads VCLMHRLGSG…LLQRDLKAFR (276 aa). Residues 69 to 77 and Lys90 contribute to the ATP site; that span reads LGSGGFGSV. The active-site Proton acceptor is the Asp198.

The protein belongs to the protein kinase superfamily. Ser/Thr protein kinase family.

The catalysed reaction is L-seryl-[protein] + ATP = O-phospho-L-seryl-[protein] + ADP + H(+). The enzyme catalyses L-threonyl-[protein] + ATP = O-phospho-L-threonyl-[protein] + ADP + H(+). The protein is Serine/threonine-protein kinase-transforming protein mos (V-MOS) of Myeloproliferative sarcoma virus (isolate ts159).